The chain runs to 247 residues: PHD finger protein ALFIN-LIKE 3 (247 aa).

A disordered region spans residues Asp-147–Glu-178. A PHD-type zinc finger spans residues Glu-188–Ser-240.

Belongs to the Alfin family. Interacts with H3K4me3 and to a lesser extent with H3K4me2.

The protein localises to the nucleus. Its function is as follows. Histone-binding component that specifically recognizes H3 tails trimethylated on 'Lys-4' (H3K4me3), which mark transcription start sites of virtually all active genes. The sequence is that of PHD finger protein ALFIN-LIKE 3 from Oryza sativa subsp. indica (Rice).